Here is a 36-residue protein sequence, read N- to C-terminus: Defensin-like turtle egg white protein TEWP (36 aa).

Gln-1 carries the pyrrolidone carboxylic acid modification. 3 cysteine pairs are disulfide-bonded: Cys-4-Cys-30, Cys-8-Cys-29, and Cys-12-Cys-24.

Belongs to the beta-defensin family. As to quaternary structure, monomer. Detected in egg white (at protein level).

It is found in the secreted. In terms of biological role, antibacterial and antiviral peptide. Has strong inhibitory activity towards E.coli and S.typhimurium. Has significant antiviral activity against Chandipura virus. The chain is Defensin-like turtle egg white protein TEWP from Caretta caretta (Loggerhead sea turtle).